We begin with the raw amino-acid sequence, 196 residues long: MIPVVIEQTSRGERSYDIYSRLLKDRIIMLTGPVEDNMANSVIAQLLFLDAQDNTKDIYLYVNTPGGSVSAGLAIVDTMNFIKADVQTIVMGMAASMGTVIASSGTKGKRFMLPNAEYMIHQPMGGTGGGTQQTDMAIAAEHLLKTRHRLEKILAQNAGKTIKQIHKDAERDYWMSAEETLAYGFIDEIMENNELK.

The active-site Nucleophile is serine 96. Histidine 121 is an active-site residue.

The protein belongs to the peptidase S14 family. Fourteen ClpP subunits assemble into 2 heptameric rings which stack back to back to give a disk-like structure with a central cavity, resembling the structure of eukaryotic proteasomes.

The protein resides in the cytoplasm. It carries out the reaction Hydrolysis of proteins to small peptides in the presence of ATP and magnesium. alpha-casein is the usual test substrate. In the absence of ATP, only oligopeptides shorter than five residues are hydrolyzed (such as succinyl-Leu-Tyr-|-NHMec, and Leu-Tyr-Leu-|-Tyr-Trp, in which cleavage of the -Tyr-|-Leu- and -Tyr-|-Trp bonds also occurs).. Its function is as follows. Cleaves peptides in various proteins in a process that requires ATP hydrolysis. Has a chymotrypsin-like activity. Plays a major role in the degradation of misfolded proteins. The polypeptide is ATP-dependent Clp protease proteolytic subunit (Streptococcus pyogenes serotype M3 (strain SSI-1)).